Here is a 305-residue protein sequence, read N- to C-terminus: UDP-3-O-acyl-N-acetylglucosamine deacetylase (305 aa).

Positions 79, 238, and 242 each coordinate Zn(2+). Catalysis depends on H265, which acts as the Proton donor.

It belongs to the LpxC family. Zn(2+) is required as a cofactor.

The catalysed reaction is a UDP-3-O-[(3R)-3-hydroxyacyl]-N-acetyl-alpha-D-glucosamine + H2O = a UDP-3-O-[(3R)-3-hydroxyacyl]-alpha-D-glucosamine + acetate. It participates in glycolipid biosynthesis; lipid IV(A) biosynthesis; lipid IV(A) from (3R)-3-hydroxytetradecanoyl-[acyl-carrier-protein] and UDP-N-acetyl-alpha-D-glucosamine: step 2/6. Catalyzes the hydrolysis of UDP-3-O-myristoyl-N-acetylglucosamine to form UDP-3-O-myristoylglucosamine and acetate, the committed step in lipid A biosynthesis. In Pectobacterium atrosepticum (strain SCRI 1043 / ATCC BAA-672) (Erwinia carotovora subsp. atroseptica), this protein is UDP-3-O-acyl-N-acetylglucosamine deacetylase.